The primary structure comprises 293 residues: MTLEGHACAFGAGTIINAIATWKGAAFGIDLKTFADVELSESESVITGSIKEVPEGDTRLIERCVELVLGRFGLELGGTIRTWSEIPLAGGLKSSSAAANASVLATLHAVGETMPSLEIIKLGVRAAKEVGVTVTGAFDDACASFLGGIVITDNRNMKLIKREEADSRVLIFAPSKKAFSADTNVKRSRLIAPYVEMAYELALAGDYERAMTLNGFLYCGALGFDTEYMLRALECGVKGVSLSGTGPSYAALVKADQVKELKSAWESCGMEGRVIETSINNSGAISFNREGSS.

87–97 (PLAGGLKSSSA) contacts ATP.

This sequence belongs to the GHMP kinase family. Archaeal shikimate kinase subfamily.

Its subcellular location is the cytoplasm. It catalyses the reaction shikimate + ATP = 3-phosphoshikimate + ADP + H(+). The protein operates within metabolic intermediate biosynthesis; chorismate biosynthesis; chorismate from D-erythrose 4-phosphate and phosphoenolpyruvate: step 5/7. This Methanosarcina mazei (strain ATCC BAA-159 / DSM 3647 / Goe1 / Go1 / JCM 11833 / OCM 88) (Methanosarcina frisia) protein is Shikimate kinase.